The sequence spans 130 residues: ATP synthase epsilon chain (130 aa).

It belongs to the ATPase epsilon chain family. As to quaternary structure, F-type ATPases have 2 components, CF(1) - the catalytic core - and CF(0) - the membrane proton channel. CF(1) has five subunits: alpha(3), beta(3), gamma(1), delta(1), epsilon(1). CF(0) has three main subunits: a, b and c.

It is found in the cell membrane. Functionally, produces ATP from ADP in the presence of a proton gradient across the membrane. This is ATP synthase epsilon chain (atpC) from Mycoplasmoides gallisepticum (strain R(low / passage 15 / clone 2)) (Mycoplasma gallisepticum).